A 306-amino-acid chain; its full sequence is MGRIARGSKMSSLIVSLLVVLVSLNLASETTAKYTYSSPPPPEHSPPPPEHSPPPPYHYESPPPPKHSPPPPTPVYKYKSPPPPMHSPPPPYHFESPPPPKHSPPPPTPVYKYKSPPPPKHSPAPVHHYKYKSPPPPTPVYKYKSPPPPKHSPAPEHHYKYKSPPPPKHFPAPEHHYKYKYKSPPPPTPVYKYKSPPPPTPVYKYKSPPPPKHSPAPVHHYKYKSPPPPTPVYKSPPPPEHSPPPPTPVYKYKSPPPPMHSPPPPTPVYKYKSPPPPMHSPPPPVYSPPPPKHHYSYTSPPPPHHY.

The N-terminal stretch at 1–32 (MGRIARGSKMSSLIVSLLVVLVSLNLASETTA) is a signal peptide. A disordered region spans residues 33–306 (KYTYSSPPPP…YTSPPPPHHY (274 aa)). 4 stretches are compositionally biased toward pro residues: residues 38–122 (SPPP…PKHS), 133–152 (SPPP…PKHS), 183–214 (SPPP…PKHS), and 225–290 (SPPP…SPPP).

Hydroxylated on proline residues in the S-P-P-P-P repeat. Post-translationally, O-glycosylated on hydroxyprolines.

The protein resides in the secreted. The protein localises to the primary cell wall. Functionally, structural component in primary cell wall. In Daucus carota (Wild carrot), this protein is Extensin.